Here is a 303-residue protein sequence, read N- to C-terminus: 2-dehydropantoate 2-reductase (303 aa).

NADP(+) is bound by residues 7–12 (GPGSLG), K78, N103, and A129. K185 (proton donor) is an active-site residue. Residues K185, N189, N193, N203, and 252–255 (NESS) contribute to the substrate site. E267 serves as a coordination point for NADP(+).

The protein belongs to the ketopantoate reductase family.

The protein resides in the cytoplasm. The catalysed reaction is (R)-pantoate + NAD(+) = 2-dehydropantoate + NADH + H(+). It carries out the reaction (R)-pantoate + NADP(+) = 2-dehydropantoate + NADPH + H(+). The protein operates within cofactor biosynthesis; coenzyme A biosynthesis. Functionally, catalyzes the NAD(P)H-dependent reduction of ketopantoate into pantoic acid. The polypeptide is 2-dehydropantoate 2-reductase (Halobacterium salinarum (strain ATCC 700922 / JCM 11081 / NRC-1) (Halobacterium halobium)).